The chain runs to 305 residues: Homoserine kinase (305 aa).

An ATP-binding site is contributed by 95–105 (PHGRGLGSSSA).

It belongs to the GHMP kinase family. Homoserine kinase subfamily.

It is found in the cytoplasm. The catalysed reaction is L-homoserine + ATP = O-phospho-L-homoserine + ADP + H(+). The protein operates within amino-acid biosynthesis; L-threonine biosynthesis; L-threonine from L-aspartate: step 4/5. Catalyzes the ATP-dependent phosphorylation of L-homoserine to L-homoserine phosphate. The protein is Homoserine kinase of Streptomyces avermitilis (strain ATCC 31267 / DSM 46492 / JCM 5070 / NBRC 14893 / NCIMB 12804 / NRRL 8165 / MA-4680).